The following is a 406-amino-acid chain: MARAFLFVLDSFGIGNAPDAGAFGDLGADTLGHIAEFCAAGAADRAGLREGPLNLPNMSALGLMHAARLATGRLPAGMALPERVYGVYGAASEVSRGKDTPSGHWEIAGTPVTFDWGYFPADGDAFPPELVEAICREGDVPGILGNCHASGTDIIARLGEEHMRTGKPICYTSSDSVFQIAAHEQTFGLERLQDLCAVVRRLVDEYNIGRVIARPFVGSDPGSFTRTGNRRDYSVLPPAPTVLDRLKEAGRTVHAIGKIADIFAHQGVTRLTKANGNMALFDASLAAIDEAEDGALIFTNFVDFDMLYGHRRDVAGYAAALEAFDARLPDLDRRLKPGDMVILTADHGCDPTWRGTDHTRERVPVLMFGPTLRSRSVGIVGSFAHIGETVASHLGIDPGPHGRSLI.

The Mn(2+) site is built by Asp-10, Asp-305, His-310, Asp-346, His-347, and His-358.

It belongs to the phosphopentomutase family. Requires Mn(2+) as cofactor.

Its subcellular location is the cytoplasm. It carries out the reaction 2-deoxy-alpha-D-ribose 1-phosphate = 2-deoxy-D-ribose 5-phosphate. The enzyme catalyses alpha-D-ribose 1-phosphate = D-ribose 5-phosphate. It participates in carbohydrate degradation; 2-deoxy-D-ribose 1-phosphate degradation; D-glyceraldehyde 3-phosphate and acetaldehyde from 2-deoxy-alpha-D-ribose 1-phosphate: step 1/2. In terms of biological role, isomerase that catalyzes the conversion of deoxy-ribose 1-phosphate (dRib-1-P) and ribose 1-phosphate (Rib-1-P) to deoxy-ribose 5-phosphate (dRib-5-P) and ribose 5-phosphate (Rib-5-P), respectively. In Sinorhizobium medicae (strain WSM419) (Ensifer medicae), this protein is Phosphopentomutase.